We begin with the raw amino-acid sequence, 273 residues long: Rhamnulose-1-phosphate aldolase (273 aa).

Glu-117 is a catalytic residue. Residues His-140, His-142, and His-211 each coordinate Zn(2+).

This sequence belongs to the aldolase class II family. RhaD subfamily. Requires Zn(2+) as cofactor.

Its subcellular location is the cytoplasm. The enzyme catalyses L-rhamnulose 1-phosphate = (S)-lactaldehyde + dihydroxyacetone phosphate. Its pathway is carbohydrate degradation; L-rhamnose degradation; glycerone phosphate from L-rhamnose: step 3/3. Functionally, catalyzes the reversible cleavage of L-rhamnulose-1-phosphate to dihydroxyacetone phosphate (DHAP) and L-lactaldehyde. This Listeria monocytogenes serovar 1/2a (strain ATCC BAA-679 / EGD-e) protein is Rhamnulose-1-phosphate aldolase.